The following is a 1387-amino-acid chain: Dicer-like protein 2-1 (1387 aa).

In terms of domain architecture, Helicase ATP-binding spans 26–205 (MFEASLKENI…LLKIESNLDA (180 aa)). 39-46 (MGTGSGKT) provides a ligand contact to ATP. The DEAH box signature appears at 146-149 (DEAH). The Helicase C-terminal domain maps to 370–535 (KFRSLLEFLD…AYEDDERRLR (166 aa)). A Dicer dsRNA-binding fold domain is found at 565-659 (AVAHLNHFCA…LPFKRNLELK (95 aa)). RNase III domains are found at residues 915 to 1055 (ATRL…IDGG) and 1094 to 1277 (DDHL…IDSH). Mg(2+) is bound by residues E1133, D1263, and E1266.

Belongs to the helicase family. Dicer subfamily. Mg(2+) serves as cofactor. Requires Mn(2+) as cofactor.

Its function is as follows. Dicer-like endonuclease involved in cleaving double-stranded RNA in the RNA interference (RNAi) pathway. Produces 21 to 25 bp dsRNAs (siRNAs) which target the selective destruction of homologous RNAs leading to sequence-specific suppression of gene expression, called post-transcriptional gene silencing (PTGS). Part of a broad host defense response against viral infection and transposons. In Aspergillus niger (strain ATCC MYA-4892 / CBS 513.88 / FGSC A1513), this protein is Dicer-like protein 2-1 (dcl2-1).